The following is a 177-amino-acid chain: ATP-dependent protease subunit HslV (177 aa).

The active site involves Thr6. Positions 162, 165, and 168 each coordinate Na(+).

The protein belongs to the peptidase T1B family. HslV subfamily. A double ring-shaped homohexamer of HslV is capped on each side by a ring-shaped HslU homohexamer. The assembly of the HslU/HslV complex is dependent on binding of ATP.

It is found in the cytoplasm. It carries out the reaction ATP-dependent cleavage of peptide bonds with broad specificity.. With respect to regulation, allosterically activated by HslU binding. Protease subunit of a proteasome-like degradation complex believed to be a general protein degrading machinery. The chain is ATP-dependent protease subunit HslV from Lawsonia intracellularis (strain PHE/MN1-00).